An 85-amino-acid polypeptide reads, in one-letter code: UPF0335 protein Plav_2034 (85 aa).

Belongs to the UPF0335 family.

This chain is UPF0335 protein Plav_2034, found in Parvibaculum lavamentivorans (strain DS-1 / DSM 13023 / NCIMB 13966).